We begin with the raw amino-acid sequence, 480 residues long: ATP synthase subunit beta (480 aa).

154–161 serves as a coordination point for ATP; that stretch reads GGAGVGKT.

This sequence belongs to the ATPase alpha/beta chains family. In terms of assembly, F-type ATPases have 2 components, CF(1) - the catalytic core - and CF(0) - the membrane proton channel. CF(1) has five subunits: alpha(3), beta(3), gamma(1), delta(1), epsilon(1). CF(0) has four main subunits: a(1), b(1), b'(1) and c(9-12).

The protein resides in the cell inner membrane. It carries out the reaction ATP + H2O + 4 H(+)(in) = ADP + phosphate + 5 H(+)(out). Produces ATP from ADP in the presence of a proton gradient across the membrane. The catalytic sites are hosted primarily by the beta subunits. The polypeptide is ATP synthase subunit beta (Bradyrhizobium sp. (strain ORS 278)).